The chain runs to 346 residues: Cobalt transport protein CbiM (346 aa).

An N-terminal signal peptide occupies residues 1 to 25 (MKRITLYAAGSAIIGAMLLAGPAHA). 8 consecutive transmembrane segments (helical) span residues 31–51 (GILP…FLAL), 68–88 (PLVG…IPVP), 101–121 (IAAI…ALLI), 133–153 (TLGA…WFVF), 159–179 (LGAG…WATY), 196–216 (FYPL…PLGV), 255–275 (ATVV…AGPS), and 312–332 (LLLF…GYFW).

It belongs to the CbiM family. In terms of assembly, forms an energy-coupling factor (ECF) transporter complex composed of an ATP-binding protein (A component, CbiO), a transmembrane protein (T component, CbiQ) and 2 possible substrate-capture proteins (S components, CbiM and CbiN) of unknown stoichimetry.

Its subcellular location is the cell inner membrane. The protein operates within cofactor biosynthesis; adenosylcobalamin biosynthesis. In terms of biological role, part of the energy-coupling factor (ECF) transporter complex CbiMNOQ involved in cobalt import. This chain is Cobalt transport protein CbiM, found in Geobacter sulfurreducens (strain ATCC 51573 / DSM 12127 / PCA).